Reading from the N-terminus, the 250-residue chain is Probable transcriptional regulatory protein Rxyl_1318 (250 aa).

It belongs to the TACO1 family.

The protein resides in the cytoplasm. This is Probable transcriptional regulatory protein Rxyl_1318 from Rubrobacter xylanophilus (strain DSM 9941 / JCM 11954 / NBRC 16129 / PRD-1).